We begin with the raw amino-acid sequence, 220 residues long: Vesicle-associated membrane protein 7 (220 aa).

Position 2 is an N-acetylalanine (A2). Residues 2-188 are Cytoplasmic-facing; it reads AILFAVVARG…ARAMCMKNLK (187 aa). Positions 7 to 110 constitute a Longin domain; the sequence is VVARGTTILA…AMNSEFSSVL (104 aa). In terms of domain architecture, v-SNARE coiled-coil homology spans 125-185; that stretch reads KVMETQAQVD…RNLARAMCMK (61 aa). Residues S167 and S168 each carry the phosphoserine modification. The chain crosses the membrane as a helical; Anchor for type IV membrane protein span at residues 189 to 209; the sequence is LTIIIIIISVVFIYIIVSPLC. Topologically, residues 210–220 are vesicular; it reads GGFTWPNCVKK.

This sequence belongs to the synaptobrevin family. As to quaternary structure, component of the SNARE complex composed of STX4, SNAP23 and VAMP7 that binds SYT7 during lysosomal exocytosis. Component of the SNARE complex composed of STX7, STX8, VAMP7 and VTI1B that is required for heterotypic fusion of late endosomes with lysosomes. May interact with STX17. Interacts with PICALM. Interacts with RAB21.

The protein resides in the cytoplasmic vesicle. It is found in the secretory vesicle membrane. The protein localises to the golgi apparatus. Its subcellular location is the trans-Golgi network membrane. It localises to the late endosome membrane. The protein resides in the lysosome membrane. It is found in the endoplasmic reticulum membrane. The protein localises to the phagosome membrane. Its subcellular location is the synapse. It localises to the synaptosome. Its function is as follows. Involved in the targeting and/or fusion of transport vesicles to their target membrane during transport of proteins from the early endosome to the lysosome. Required for heterotypic fusion of late endosomes with lysosomes and homotypic lysosomal fusion. Required for calcium regulated lysosomal exocytosis. Involved in the export of chylomicrons from the endoplasmic reticulum to the cis Golgi. Required for exocytosis of mediators during eosinophil and neutrophil degranulation, and target cell killing by natural killer cells. Required for focal exocytosis of late endocytic vesicles during phagosome formation. The polypeptide is Vesicle-associated membrane protein 7 (VAMP7) (Bos taurus (Bovine)).